A 611-amino-acid chain; its full sequence is Mitogen-activated protein kinase 10 (611 aa).

The 292-residue stretch at 25-316 (YKIQEVIGKG…AEEALAHPYF (292 aa)) folds into the Protein kinase domain. Residues 31–39 (IGKGSYGVV) and K54 contribute to the ATP site. The active-site Proton acceptor is D151. The residue at position 187 (T187) is a Phosphothreonine. The short motif at 187 to 189 (TDY) is the TXY element. Y189 bears the Phosphotyrosine mark. The segment at 394-481 (ENGGNGPVIP…RVVGPVLPYE (88 aa)) is disordered. A compositionally biased stretch (basic and acidic residues) spans 426–439 (EQPRIGPSRDKPSD).

It belongs to the protein kinase superfamily. CMGC Ser/Thr protein kinase family. MAP kinase subfamily. In terms of processing, dually phosphorylated on Thr-187 and Tyr-189, which activates the enzyme.

It catalyses the reaction L-seryl-[protein] + ATP = O-phospho-L-seryl-[protein] + ADP + H(+). The catalysed reaction is L-threonyl-[protein] + ATP = O-phospho-L-threonyl-[protein] + ADP + H(+). With respect to regulation, activated by threonine and tyrosine phosphorylation. The chain is Mitogen-activated protein kinase 10 (MPK10) from Oryza sativa subsp. japonica (Rice).